A 321-amino-acid polypeptide reads, in one-letter code: Lipoyl synthase (321 aa).

Residues C68, C73, C79, C94, C98, C101, and S308 each contribute to the [4Fe-4S] cluster site. A Radical SAM core domain is found at 80 to 297; the sequence is FNHGTATFMI…KEVALELGFT (218 aa).

Belongs to the radical SAM superfamily. Lipoyl synthase family. [4Fe-4S] cluster is required as a cofactor.

It localises to the cytoplasm. It carries out the reaction [[Fe-S] cluster scaffold protein carrying a second [4Fe-4S](2+) cluster] + N(6)-octanoyl-L-lysyl-[protein] + 2 oxidized [2Fe-2S]-[ferredoxin] + 2 S-adenosyl-L-methionine + 4 H(+) = [[Fe-S] cluster scaffold protein] + N(6)-[(R)-dihydrolipoyl]-L-lysyl-[protein] + 4 Fe(3+) + 2 hydrogen sulfide + 2 5'-deoxyadenosine + 2 L-methionine + 2 reduced [2Fe-2S]-[ferredoxin]. It participates in protein modification; protein lipoylation via endogenous pathway; protein N(6)-(lipoyl)lysine from octanoyl-[acyl-carrier-protein]: step 2/2. Its function is as follows. Catalyzes the radical-mediated insertion of two sulfur atoms into the C-6 and C-8 positions of the octanoyl moiety bound to the lipoyl domains of lipoate-dependent enzymes, thereby converting the octanoylated domains into lipoylated derivatives. In Vibrio parahaemolyticus serotype O3:K6 (strain RIMD 2210633), this protein is Lipoyl synthase.